A 669-amino-acid chain; its full sequence is DNA ligase (669 aa).

Residues 34 to 38 (DAEYD), 83 to 84 (SL), and E114 each bind NAD(+). K116 acts as the N6-AMP-lysine intermediate in catalysis. NAD(+) contacts are provided by R137, E171, K287, and K311. C405, C408, C423, and C428 together coordinate Zn(2+). The BRCT domain occupies 591–669 (NIASYFAGKT…EERFLQELNK (79 aa)).

It belongs to the NAD-dependent DNA ligase family. LigA subfamily. It depends on Mg(2+) as a cofactor. Mn(2+) is required as a cofactor.

The enzyme catalyses NAD(+) + (deoxyribonucleotide)n-3'-hydroxyl + 5'-phospho-(deoxyribonucleotide)m = (deoxyribonucleotide)n+m + AMP + beta-nicotinamide D-nucleotide.. DNA ligase that catalyzes the formation of phosphodiester linkages between 5'-phosphoryl and 3'-hydroxyl groups in double-stranded DNA using NAD as a coenzyme and as the energy source for the reaction. It is essential for DNA replication and repair of damaged DNA. This Bacillus cytotoxicus (strain DSM 22905 / CIP 110041 / 391-98 / NVH 391-98) protein is DNA ligase.